The following is a 108-amino-acid chain: UPF0060 membrane protein SH0717 (108 aa).

4 consecutive transmembrane segments (helical) span residues 5 to 25 (IFIF…IWLW), 31 to 51 (SSWL…IATF), 60 to 80 (VYAA…YIVD), and 86 to 106 (KYDL…ILPS).

Belongs to the UPF0060 family.

Its subcellular location is the cell membrane. This Staphylococcus haemolyticus (strain JCSC1435) protein is UPF0060 membrane protein SH0717.